Consider the following 372-residue polypeptide: Ubiquitin carboxyl-terminal hydrolase 12 (372 aa).

In terms of domain architecture, USP spans 39–371; the sequence is FGLVNFGNTC…SGYILFYQSR (333 aa). The active-site Nucleophile is Cys48. The segment at 150–169 is disordered; the sequence is NGRLANGSLDSQNHNSNAPP. Residues 157-166 show a composition bias toward polar residues; that stretch reads SLDSQNHNSN. The Zn(2+) site is built by Cys188, Cys191, Cys235, and Cys238. Catalysis depends on His319, which acts as the Proton acceptor.

It belongs to the peptidase C19 family. USP12/USP46 subfamily. As to quaternary structure, interacts with WDR48.

It catalyses the reaction Thiol-dependent hydrolysis of ester, thioester, amide, peptide and isopeptide bonds formed by the C-terminal Gly of ubiquitin (a 76-residue protein attached to proteins as an intracellular targeting signal).. Deubiquitinating enzyme. Has almost no deubiquitinating activity by itself and requires the interaction with wdr48 to have a high activity. This Salmo salar (Atlantic salmon) protein is Ubiquitin carboxyl-terminal hydrolase 12 (usp12).